The primary structure comprises 883 residues: MQKIMHISVLLSPVLWGLIFGVSSNSIQIGGLFPRGADQEYSAFRVGMVQFSTSEFRLTPHIDNLEVANSFAVTNAFCSQFSRGVYAIFGFYDKKSVNTITSFCGTLHVSFITPSFPTDGTHPFVIQMRPDLKGALLSLIEYYQWDKFAYLYDSDRGLSTLQAVLDSAAEKKWQVTAINVGNINNDKKDETYRSLFQDLELKKERRVILDCERDKVNDIVDQVITIGKHVKGYHYIIANLGFTDGDLLKIQFGGANVSGFQIVDYDDSLVSKFIERWSTLEEKEYPGAHTATIKYTSALTYDAVQVMTEAFRNLRKQRIEISRRGNAGDCLANPAVPWGQGVEIERALKQVQVEGLSGNIKFDQNGKRINYTINIMELKTNGPRKIGYWSEVDKMVVTLTELPSGNDTSGLENKTVVVTTILESPYVMMKKNHEMLEGNERYEGYCVDLAAEIAKHCGFKYKLTIVGDGKYGARDADTKIWNGMVGELVYGKADIAIAPLTITLVREEVIDFSKPFMSLGISIMIKKPQKSKPGVFSFLDPLAYEIWMCIVFAYIGVSVVLFLVSRFSPYEWHTEEFEDGRETQSSESTNEFGIFNSLWFSLGAFMQQGCDISPRSLSGRIVGGVWWFFTLIIISSYTANLAAFLTVERMVSPIESAEDLSKQTEIAYGTLDSGSTKEFFRRSKIAVFDKMWTYMRSAEPSVFVRTTAEGVARVRKSKGKYAYLLESTMNEYIEQRKPCDTMKVGGNLDSKGYGIATPKGSSLGNAVNLAVLKLNEQGLLDKLKNKWWYDKGECGSGGGDSKEKTSALSLSNVAGVFYILVGGLGLAMLVALIEFCYKSRAEAKRMKVAKNAQNINPSSSQNSQNFATYKEGYNVYGIESVKI.

An N-terminal signal peptide occupies residues 1–24 (MQKIMHISVLLSPVLWGLIFGVSS). Over 25–543 (NSIQIGGLFP…GVFSFLDPLA (519 aa)) the chain is Extracellular. Residues C78 and C330 are joined by a disulfide bond. N-linked (GlcNAc...) asparagine glycans are attached at residues N256, N370, N406, and N413. Residues P499, T501, and R506 each coordinate L-glutamate. A helical membrane pass occupies residues 544–564 (YEIWMCIVFAYIGVSVVLFLV). The Cytoplasmic segment spans residues 565-591 (SRFSPYEWHTEEFEDGRETQSSESTNE). The segment at residues 592–607 (FGIFNSLWFSLGAFMQ) is an intramembrane region (helical; Pore-forming). The stretch at 608-610 (QGC) is an intramembrane region. C610 carries S-palmitoyl cysteine lipidation. Residues 611-616 (DISPRS) are Cytoplasmic-facing. A helical membrane pass occupies residues 617-637 (LSGRIVGGVWWFFTLIIISSY). Topologically, residues 638 to 812 (TANLAAFLTV…EKTSALSLSN (175 aa)) are extracellular. L-glutamate-binding residues include S675 and T676. A Phosphoserine; by PKC modification is found at S683. Position 717 is a phosphoserine; by PKG (S717). E726 is an L-glutamate binding site. C739 and C794 are oxidised to a cystine. A helical membrane pass occupies residues 813 to 833 (VAGVFYILVGGLGLAMLVALI). The Cytoplasmic segment spans residues 834-883 (EFCYKSRAEAKRMKVAKNAQNINPSSSQNSQNFATYKEGYNVYGIESVKI). The S-palmitoyl cysteine moiety is linked to residue C836. 2 positions are modified to phosphoserine: S860 and S863. A required for interaction with IQSEC1 region spans residues 867 to 877 (ATYKEGYNVYG). Y876 carries the post-translational modification Phosphotyrosine. S880 carries the post-translational modification Phosphoserine.

Belongs to the glutamate-gated ion channel (TC 1.A.10.1) family. GRIA2 subfamily. As to quaternary structure, homotetramer or heterotetramer of pore-forming glutamate receptor subunits. Tetramers may be formed by the dimerization of dimers. May interact with MPP4. Forms a ternary complex with GRIP1 and CSPG4. Interacts with ATAD1 in an ATP-dependent manner. ATAD1-catalyzed ATP hydrolysis disrupts binding to ATAD1 and to GRIP1 and leads to AMPAR complex disassembly. Interacts with GRIP1 and GRIP2. Interacts with NSF via its C-terminus. Isoform 1, but not isoform 3, interacts with PICK1. Interacts with CACNG2. Interacts with GRIA1 and SYNDIG1. Part of a complex containing GRIA2, NSF and NAPA and/or NAPB. Interacts with SNX27 (via PDZ domain); the interaction is required for recycling to the plasma membrane when endocytosed and prevent degradation in lysosomes. Interacts with LRFN1. Found in a complex with GRIA1, GRIA3, GRIA4, CNIH2, CNIH3, CACNG2, CACNG3, CACNG4, CACNG5, CACNG7 and CACNG8. Interacts with CACNG5. Interacts with OLFM2. Interacts with AP4B1, AP4E1 and AP4M1; probably indirect it mediates the somatodendritic localization of GRIA2 in neurons. Forms a complex with GRIP1, NSG1 and STX12; controls the intracellular fate of AMPAR and the endosomal sorting of the GRIA2 subunit toward recycling and membrane targeting. Interacts with IQSEC1; the interaction is required for ARF6 activation. Interacts (heterotetramer form) with CNIH2 and CNIH3; this interaction promotes expression at the plasma membrane and extensively modulates their gating properties by slowing deactivation and desensitization kinetics. In terms of processing, palmitoylated. Depalmitoylated upon L-glutamate stimulation. ZDHHC3/GODZ specifically palmitoylates Cys-610, which leads to Golgi retention and decreased cell surface expression. In contrast, Cys-836 palmitoylation does not affect cell surface expression but regulates stimulation-dependent endocytosis. N-glycosylated. Post-translationally, ubiquitinated by RNF167, leading to its degradation. In terms of processing, phosphorylation at Tyr-876 is required for interaction with IQSEC1 and ARF6 activation, which in turn triggers AMPAR internalization for persistent synaptic depression. In terms of tissue distribution, detected in brain cortex, hippocampus and cerebellum (at protein level). Detected in hippocampus.

The protein resides in the cell membrane. The protein localises to the postsynaptic cell membrane. Its subcellular location is the postsynaptic density membrane. The catalysed reaction is Ca(2+)(in) = Ca(2+)(out). It catalyses the reaction Na(+)(in) = Na(+)(out). In terms of biological role, ionotropic glutamate receptor that functions as a ligand-gated cation channel, gated by L-glutamate and glutamatergic agonists such as alpha-amino-3-hydroxy-5-methyl-4-isoxazolepropionic acid (AMPA), quisqualic acid, and kainic acid. L-glutamate acts as an excitatory neurotransmitter at many synapses in the central nervous system and plays an important role in fast excitatory synaptic transmission. Binding of the excitatory neurotransmitter L-glutamate induces a conformation change, leading to the opening of the cation channel, and thereby converts the chemical signal to an electrical impulse upon entry of monovalent and divalent cations such as sodium and calcium. The receptor then desensitizes rapidly and enters in a transient inactive state, characterized by the presence of bound agonist. In the presence of CACNG4 or CACNG7 or CACNG8, shows resensitization which is characterized by a delayed accumulation of current flux upon continued application of L-glutamate. Through complex formation with NSG1, GRIP1 and STX12 controls the intracellular fate of AMPAR and the endosomal sorting of the GRIA2 subunit toward recycling and membrane targeting. The sequence is that of Glutamate receptor 2 from Mus musculus (Mouse).